Here is a 325-residue protein sequence, read N- to C-terminus: Aldo-keto reductase family 1 member A1 (325 aa).

An N-acetylalanine modification is found at Ala2. Ser4 is subject to Phosphoserine. NADP(+)-binding positions include 11–20, Thr21, and Trp22; that span reads GQKMPLIGLG. Ser38 carries the phosphoserine modification. Residue Asp45 participates in NADP(+) binding. Tyr50 acts as the Proton donor in catalysis. The residue at position 127 (Lys127) is an N6-acetyllysine; alternate. Position 127 is an N6-succinyllysine; alternate (Lys127). Lys145 bears the N6-succinyllysine mark. NADP(+) contacts are provided by Ser162, Asn163, Ser211, Leu213, Ser215, Ser216, Lys263, Ser264, Ile265, Thr266, Arg269, Gln272, and Asn273. A Phosphoserine modification is found at Ser211.

This sequence belongs to the aldo/keto reductase family. Monomer. Widely expressed. Highly expressed in kidney, salivary gland and liver. Detected in trachea, stomach, brain, lung, prostate, placenta, mammary gland, small intestine and lung.

It localises to the cytoplasm. The protein localises to the cytosol. The protein resides in the apical cell membrane. It carries out the reaction a primary alcohol + NADP(+) = an aldehyde + NADPH + H(+). The enzyme catalyses allyl alcohol + NADP(+) = acrolein + NADPH + H(+). It catalyses the reaction glycerol + NADP(+) = D-glyceraldehyde + NADPH + H(+). The catalysed reaction is glycerol + NADP(+) = L-glyceraldehyde + NADPH + H(+). It carries out the reaction hydroxyacetone + NADP(+) = methylglyoxal + NADPH + H(+). The enzyme catalyses a 4-hydroxynonen-1-ol + NADP(+) = a 4-hydroxynonenal + NADPH + H(+). It catalyses the reaction 3-deoxyfructose + NADP(+) = 3-deoxyglucosone + NADPH + H(+). The catalysed reaction is L-gulonate + NADP(+) = aldehydo-D-glucuronate + NADPH + H(+). It carries out the reaction L-gulono-1,4-lactone + NADP(+) = D-glucurono-3,6-lactone + NADPH + H(+). The enzyme catalyses pyridine 3-methanol + NADP(+) = pyridine-3-carbaldehyde + NADPH + H(+). It catalyses the reaction S-nitroso-CoA + NADPH + H(+) = sulfinamide-CoA + NADP(+). The catalysed reaction is S-nitrosoglutathione + NADPH + H(+) = S-(hydroxysulfenamide)glutathione + NADP(+). Catalyzes the NADPH-dependent reduction of a wide variety of carbonyl-containing compounds to their corresponding alcohols. Displays enzymatic activity towards endogenous metabolites such as aromatic and aliphatic aldehydes, ketones, monosaccharides and bile acids, with a preference for negatively charged substrates, such as glucuronate and succinic semialdehyde. Functions as a detoxifiying enzyme by reducing a range of toxic aldehydes. Reduces methylglyoxal and 3-deoxyglucosone, which are present at elevated levels under hyperglycemic conditions and are cytotoxic. Involved also in the detoxification of lipid-derived aldehydes like acrolein. Plays a role in the activation of procarcinogens, such as polycyclic aromatic hydrocarbon trans-dihydrodiols, and in the metabolism of various xenobiotics and drugs, including the anthracyclines doxorubicin (DOX) and daunorubicin (DAUN). Also acts as an inhibitor of protein S-nitrosylation by mediating degradation of S-nitroso-coenzyme A (S-nitroso-CoA), a cofactor required to S-nitrosylate proteins. S-nitroso-CoA reductase activity is involved in reprogramming intermediary metabolism in renal proximal tubules, notably by inhibiting protein S-nitrosylation of isoform 2 of PKM (PKM2). Also acts as a S-nitroso-glutathione reductase by catalyzing the NADPH-dependent reduction of S-nitrosoglutathione. Displays no reductase activity towards retinoids. This is Aldo-keto reductase family 1 member A1 (AKR1A1) from Homo sapiens (Human).